Reading from the N-terminus, the 317-residue chain is 2-keto-3-deoxygluconate permease 1 (317 aa).

10 helical membrane-spanning segments follow: residues 10–30, 47–67, 82–102, 106–126, 134–154, 159–179, 195–215, 217–237, 248–268, and 279–299; these read VPGG…TFAP, AAPL…VKAA, LLVA…EGIF, GVAI…ALVG, VGAI…IALG, ANIP…GMIL, PLLI…EMLL, GGLA…FFNI, IAGA…LAIA, and AAAA…TPVL.

Belongs to the KdgT transporter family.

The protein resides in the cell inner membrane. The enzyme catalyses 2-dehydro-3-deoxy-D-gluconate(in) + H(+)(in) = 2-dehydro-3-deoxy-D-gluconate(out) + H(+)(out). In terms of biological role, catalyzes the proton-dependent uptake of 2-keto-3-deoxygluconate (KDG) into the cell. The polypeptide is 2-keto-3-deoxygluconate permease 1 (Salmonella typhi).